We begin with the raw amino-acid sequence, 213 residues long: V-type ATP synthase subunit D (213 aa).

It belongs to the V-ATPase D subunit family.

Produces ATP from ADP in the presence of a proton gradient across the membrane. This is V-type ATP synthase subunit D from Clostridium botulinum (strain Alaska E43 / Type E3).